Here is a 503-residue protein sequence, read N- to C-terminus: Probable cytosol aminopeptidase (503 aa).

Lys274 and Asp279 together coordinate Mn(2+). Lys286 is an active-site residue. Residues Asp297, Asp356, and Glu358 each contribute to the Mn(2+) site. Arg360 is a catalytic residue.

The protein belongs to the peptidase M17 family. Mn(2+) is required as a cofactor.

Its subcellular location is the cytoplasm. The enzyme catalyses Release of an N-terminal amino acid, Xaa-|-Yaa-, in which Xaa is preferably Leu, but may be other amino acids including Pro although not Arg or Lys, and Yaa may be Pro. Amino acid amides and methyl esters are also readily hydrolyzed, but rates on arylamides are exceedingly low.. It carries out the reaction Release of an N-terminal amino acid, preferentially leucine, but not glutamic or aspartic acids.. In terms of biological role, presumably involved in the processing and regular turnover of intracellular proteins. Catalyzes the removal of unsubstituted N-terminal amino acids from various peptides. In Burkholderia lata (strain ATCC 17760 / DSM 23089 / LMG 22485 / NCIMB 9086 / R18194 / 383), this protein is Probable cytosol aminopeptidase.